The chain runs to 243 residues: Uridylate kinase (243 aa).

An ATP-binding site is contributed by 15–18; the sequence is KMSG. Gly57 serves as a coordination point for UMP. 2 residues coordinate ATP: Gly58 and Arg62. UMP is bound by residues Asp77 and 138–145; that span reads TGNPLVTT. The ATP site is built by Thr165, Asn166, Tyr171, and Asp174.

This sequence belongs to the UMP kinase family. In terms of assembly, homohexamer.

It is found in the cytoplasm. It catalyses the reaction UMP + ATP = UDP + ADP. It participates in pyrimidine metabolism; CTP biosynthesis via de novo pathway; UDP from UMP (UMPK route): step 1/1. With respect to regulation, inhibited by UTP. Its function is as follows. Catalyzes the reversible phosphorylation of UMP to UDP. The polypeptide is Uridylate kinase (Coxiella burnetii (strain RSA 493 / Nine Mile phase I)).